The following is a 397-amino-acid chain: Acetate kinase (397 aa).

Asn-7 is a binding site for Mg(2+). Lys-14 is a binding site for ATP. Substrate is bound at residue Arg-90. Asp-147 acts as the Proton donor/acceptor in catalysis. Residues 207 to 211, 282 to 284, and 330 to 334 each bind ATP; these read HLGNG, DFR, and GLGEN. Position 383 (Glu-383) interacts with Mg(2+).

This sequence belongs to the acetokinase family. Homodimer. Mg(2+) serves as cofactor. Mn(2+) is required as a cofactor.

The protein localises to the cytoplasm. It catalyses the reaction acetate + ATP = acetyl phosphate + ADP. The protein operates within metabolic intermediate biosynthesis; acetyl-CoA biosynthesis; acetyl-CoA from acetate: step 1/2. Functionally, catalyzes the formation of acetyl phosphate from acetate and ATP. Can also catalyze the reverse reaction. The protein is Acetate kinase of Clostridium botulinum (strain Langeland / NCTC 10281 / Type F).